The sequence spans 406 residues: Kelch domain-containing protein 2 (406 aa).

Kelch repeat units lie at residues 31 to 85 (ERSG…NTEG), 92 to 136 (SGSC…ERID), 148 to 207 (LGVW…TWSQ), 221 to 259 (HACATVGNRGFVFGGRYRDARMNDLHYLNLDTWEWNELI), 271 to 311 (HSLT…IQFN), and 322 to 359 (HTACASDEGEVIVFGGCANNLLVHHRAAHSNEILIFSV).

Component of a CRL2(KLHDC2) E3 ubiquitin-protein ligase complex, also named ECS(KLHDC2) complex, composed of CUL2, Elongin BC (ELOB and ELOC), RBX1 and substrate-specific adapter KLHDC2. May form oligomers as a KLHDC2-ELOB-ELOC complex; this interaction is autoinhibitory for the E3 ligase complex as the substrate-binding site of KLHDC2 is blocked in the oligomer. Interacts with CREB3; interaction is direct and specific as it does not interact with CREB1, ATF4, ATF6, JUN, FOS, CEBPA or herpes simplex virus transactivator VP16. In terms of processing, autoubiquitinated by the CRL2(KLHDC2) E3 ligase complex. Widely expressed, with high levels in skeletal muscle, heart, pancreas and liver. Undetectable in peripheral blood leukocytes.

Its subcellular location is the nucleus. The protein operates within protein modification; protein ubiquitination. Its function is as follows. Substrate-recognition component of a Cul2-RING (CRL2) E3 ubiquitin-protein ligase complex of the DesCEND (destruction via C-end degrons) pathway, which recognizes a C-degron located at the extreme C terminus of target proteins, leading to their ubiquitination and degradation. The C-degron recognized by the DesCEND pathway is usually a motif of less than ten residues and can be present in full-length proteins, truncated proteins or proteolytically cleaved forms. The CRL2(KLHDC2) complex specifically recognizes proteins with a diglycine (Gly-Gly) at the C-terminus, leading to their ubiquitination and degradation. The CRL2(KLHDC2) complex mediates ubiquitination and degradation of truncated SELENOK and SELENOS selenoproteins produced by failed UGA/Sec decoding, which end with a diglycine. The CRL2(KLHDC2) complex also recognizes proteolytically cleaved proteins ending with Gly-Gly, such as the N-terminal fragment of USP1, leading to their degradation. May also act as an indirect repressor of CREB3-mediated transcription by interfering with CREB3-DNA-binding. This is Kelch domain-containing protein 2 from Homo sapiens (Human).